A 331-amino-acid polypeptide reads, in one-letter code: Phosphate acyltransferase (331 aa).

This sequence belongs to the PlsX family. In terms of assembly, homodimer. Probably interacts with PlsY.

Its subcellular location is the cytoplasm. It catalyses the reaction a fatty acyl-[ACP] + phosphate = an acyl phosphate + holo-[ACP]. It participates in lipid metabolism; phospholipid metabolism. Its function is as follows. Catalyzes the reversible formation of acyl-phosphate (acyl-PO(4)) from acyl-[acyl-carrier-protein] (acyl-ACP). This enzyme utilizes acyl-ACP as fatty acyl donor, but not acyl-CoA. This is Phosphate acyltransferase from Exiguobacterium sibiricum (strain DSM 17290 / CCUG 55495 / CIP 109462 / JCM 13490 / 255-15).